The primary structure comprises 801 residues: LPS-assembly protein LptD (801 aa).

The N-terminal stretch at M1–A23 is a signal peptide.

The protein belongs to the LptD family. Component of the lipopolysaccharide transport and assembly complex. Interacts with LptE and LptA.

It is found in the cell outer membrane. In terms of biological role, together with LptE, is involved in the assembly of lipopolysaccharide (LPS) at the surface of the outer membrane. This is LPS-assembly protein LptD from Neisseria gonorrhoeae (strain ATCC 700825 / FA 1090).